The following is a 394-amino-acid chain: MALEVGDMEDGQLSDSDSDMTVAPSDRPLQLPKVLGGDSAMRAFQNTATACAPVSHYRAVESVDSSEESFSDSDDDSCLWKRKRQKCFNPPPKPEPFQFGQSSQKPPVAGGKKINNIWGAVLQEQNQDAVATELGILGMEGTIDRSRQSETYNYLLAKKLRKESQEHTKDLDKELDEYMHGGKKMGSKEEENGQGHLKRKRPVKDRLGNRPEMNYKGRYEITAEDSQEKVADEISFRLQEPKKDLIARVVRIIGNKKAIELLMETAEVEQNGGLFIMNGSRRRTPGGVFLNLLKNTPSISEEQIKDIFYIENQKEYENKKAARKRRTQVLGKKMKQAIKSLNFQEDDDTSRETFASDTNEALASLDESQEGHAEAKLEAEEAIEVDHSHDLDIF.

The span at 1-18 (MALEVGDMEDGQLSDSDS) shows a compositional bias: acidic residues. The segment at 1-33 (MALEVGDMEDGQLSDSDSDMTVAPSDRPLQLPK) is disordered. Residue A2 is modified to N-acetylalanine. The necessary for interaction with CBP80 stretch occupies residues 2-329 (ALEVGDMEDG…KAARKRRTQV (328 aa)). 6 positions are modified to phosphoserine: S14, S16, S65, S66, S69, and S73. Residues 81–84 (KRKR) carry the Nuclear localization signal motif. The interval 83 to 111 (KRQKCFNPPPKPEPFQFGQSSQKPPVAGG) is disordered. Residues 130–139 (VATELGILGM) carry the Nuclear export signal motif. The span at 183 to 193 (KKMGSKEEENG) shows a compositional bias: basic and acidic residues. The segment at 183–211 (KKMGSKEEENGQGHLKRKRPVKDRLGNRP) is disordered. Positions 198 to 201 (KRKR) match the Nuclear localization signal motif. S226 is subject to Phosphoserine. Residues 228 to 328 (EKVADEISFR…KKAARKRRTQ (101 aa)) form a sufficient for poly U RNA-binding region. The necessary for poly U RNA-binding and snRNA export stretch occupies residues 279–287 (GSRRRTPGG). T296 is subject to Phosphothreonine. Phosphoserine is present on residues S356 and S368.

The protein belongs to the PHAX family. As to quaternary structure, found in a U snRNA export complex with PHAX/RNUXA, NCBP1/CBP80, NCBP2/CBP20, RAN, XPO1 and m7G-capped RNA. Part of a precomplex with PHAX/RNUXA, NCBP1/CBP80, NCBP2/CBP20 and m7G-capped RNA. Interacts with NCBP1/CBP80. Found in a complex with snoRNA. Interacts with NCBP2/CBP20. Interacts with DDX39A; this interaction stimulates PHAX RNA binding activity. Phosphorylated in the nucleus. Dephosphorylated in the cytoplasm.

It is found in the nucleus. It localises to the nucleoplasm. Its subcellular location is the cajal body. The protein localises to the cytoplasm. A phosphoprotein adapter involved in the XPO1-mediated U snRNA export from the nucleus. Bridge components required for U snRNA export, the cap binding complex (CBC)-bound snRNA on the one hand and the GTPase Ran in its active GTP-bound form together with the export receptor XPO1 on the other. Its phosphorylation in the nucleus is required for U snRNA export complex assembly and export, while its dephosphorylation in the cytoplasm causes export complex disassembly. It is recycled back to the nucleus via the importin alpha/beta heterodimeric import receptor. The directionality of nuclear export is thought to be conferred by an asymmetric distribution of the GTP- and GDP-bound forms of Ran between the cytoplasm and nucleus. Its compartmentalized phosphorylation cycle may also contribute to the directionality of export. Binds strongly to m7G-capped U1 and U5 small nuclear RNAs (snRNAs) in a sequence-unspecific manner and phosphorylation-independent manner. Also plays a role in the biogenesis of U3 small nucleolar RNA (snoRNA). Involved in the U3 snoRNA transport from nucleoplasm to Cajal bodies. Binds strongly to m7G-capped U3, U8 and U13 precursor snoRNAs and weakly to trimethylated (TMG)-capped U3, U8 and U13 snoRNAs. Also binds to telomerase RNA. This is Phosphorylated adapter RNA export protein (PHAX) from Homo sapiens (Human).